A 142-amino-acid polypeptide reads, in one-letter code: Secreted RxLR effector protein 161 (142 aa).

A signal peptide spans 1-27 (MKNVPYLSAVGAIMYLMVVTRPDLAAA). A RxLR motif is present at residues 48–51 (RVLR).

Belongs to the RxLR effector family.

The protein resides in the secreted. Its subcellular location is the host chloroplast envelope. The protein localises to the host nucleus. Secreted effector that completely suppresses the host cell death induced by cell death-inducing proteins. The polypeptide is Secreted RxLR effector protein 161 (Plasmopara viticola (Downy mildew of grapevine)).